A 211-amino-acid polypeptide reads, in one-letter code: Interleukin-6 (211 aa).

Residues 1–24 (MKFLSARDFHPVAFLGLMLVTTTA) form the signal peptide. 2 cysteine pairs are disulfide-bonded: Cys-70–Cys-76 and Cys-99–Cys-109.

Belongs to the IL-6 superfamily. As to quaternary structure, component of a hexamer of two molecules each of IL6, IL6R and IL6ST; first binds to IL6R to associate with the signaling subunit IL6ST. Interacts with IL6R (via the N-terminal ectodomain); this interaction may be affected by IL6R-binding with SORL1, hence decreasing IL6 cis signaling. Interacts with SORL1 (via the N-terminal ectodomain); this interaction leads to IL6 internalization and lysosomal degradation. May form a trimeric complex with the soluble SORL1 ectodomain and soluble IL6R receptor; this interaction might stabilize circulating IL6, hence promoting IL6 trans signaling. In terms of processing, N- and O-glycosylated. In terms of tissue distribution, expressed by dendritic cells and macrophages. Expressed by activated follicular B cells. Abundantly expressed in the central nervous system (CNS), particularly the hypothalamic region.

It is found in the secreted. Functionally, cytokine with a wide variety of biological functions in immunity, tissue regeneration, and metabolism. Binds to IL6R, then the complex associates to the signaling subunit IL6ST/gp130 to trigger the intracellular IL6-signaling pathway. The interaction with the membrane-bound IL6R and IL6ST stimulates 'classic signaling', whereas the binding of IL6 and soluble IL6R to IL6ST stimulates 'trans-signaling'. Alternatively, 'cluster signaling' occurs when membrane-bound IL6:IL6R complexes on transmitter cells activate IL6ST receptors on neighboring receiver cells. Its function is as follows. IL6 is a potent inducer of the acute phase response. Rapid production of IL6 contributes to host defense during infection and tissue injury, but excessive IL6 synthesis is involved in disease pathology. In the innate immune response, is synthesized by myeloid cells, such as macrophages and dendritic cells, upon recognition of pathogens through toll-like receptors (TLRs) at the site of infection or tissue injury. In the adaptive immune response, is required for the differentiation of B-cells into immunoglolin-secreting cells. Plays a major role in the differentiation of CD4(+) T cell subsets. Essential factor for the development of T follicular helper (Tfh) cells that are required for the induction of germinal-center formation. Together with IL21, controls the early generation of Tfh cells and are critical for an effective antibody response to acute viral infection. Required to drive naive CD4(+) T cells to the Th17 lineage, through 'cluster signaling' by dendritic cells. Also required for proliferation of myeloma cells and the survival of plasmablast cells. In terms of biological role, acts as an essential factor in bone homeostasis and on vessels directly or indirectly by induction of VEGF, resulting in increased angiogenesis activity and vascular permeability. Induces, through 'trans-signaling' and synergistically with IL1B and TNF, the production of VEGF. Involved in metabolic controls, is discharged into the bloodstream after muscle contraction increasing lipolysis and improving insulin resistance. 'Trans-signaling' in central nervous system regulates energy and glucose homeostasis. Mediates, through GLP-1, crosstalk between insulin-sensitive tissues, intestinal L cells and pancreatic islets to adapt to changes in insulin demand. Also acts as a myokine. Plays a protective role during liver injury, being required for maintenance of tissue regeneration. Also has a pivotal role in iron metabolism by regulating HAMP/hepcidin expression upon inflammation or bacterial infection. Through activation of IL6ST-YAP-NOTCH pathway, induces inflammation-induced epithelial regeneration. This Mus musculus (Mouse) protein is Interleukin-6.